Consider the following 132-residue polypeptide: Small ribosomal subunit protein eS24 (132 aa).

The segment covering 90 to 100 (RLAKHGLYEKK) has biased composition (basic and acidic residues). Residues 90–132 (RLAKHGLYEKKKTSRKQRKERKNRMKKVRGTAKANVGAGKKKD) form a disordered region. A compositionally biased stretch (basic residues) spans 101–119 (KTSRKQRKERKNRMKKVRG).

Belongs to the eukaryotic ribosomal protein eS24 family. As to quaternary structure, component of the small ribosomal subunit. Part of the small subunit (SSU) processome, composed of more than 70 proteins and the RNA chaperone small nucleolar RNA (snoRNA) U3.

The protein resides in the cytoplasm. It is found in the nucleus. It localises to the nucleolus. Component of the small ribosomal subunit. The ribosome is a large ribonucleoprotein complex responsible for the synthesis of proteins in the cell. Required for processing of pre-rRNA and maturation of 40S ribosomal subunits. Part of the small subunit (SSU) processome, first precursor of the small eukaryotic ribosomal subunit. During the assembly of the SSU processome in the nucleolus, many ribosome biogenesis factors, an RNA chaperone and ribosomal proteins associate with the nascent pre-rRNA and work in concert to generate RNA folding, modifications, rearrangements and cleavage as well as targeted degradation of pre-ribosomal RNA by the RNA exosome. In Xenopus laevis (African clawed frog), this protein is Small ribosomal subunit protein eS24 (rps24).